Consider the following 217-residue polypeptide: Variable small protein 22 (217 aa).

Positions 1-18 are cleaved as a signal peptide; that stretch reads MRKRISAIIMTLFMVFMS. Cys19 carries N-palmitoyl cysteine lipidation. A lipid anchor (S-diacylglycerol cysteine) is attached at Cys19. A disordered region spans residues 151-174; it reads LGKNDASDDDTKKAIKKDNSDKTK. The span at 155 to 174 shows a compositional bias: basic and acidic residues; the sequence is DASDDDTKKAIKKDNSDKTK.

Belongs to the variable small protein (Vsp) family.

The protein resides in the cell outer membrane. Functionally, the Vlp and Vsp proteins are antigenically distinct proteins, only one vlp or vsp gene is transcriptionally active at any one time. Switching between these genes is a mechanism of host immune response evasion. The chain is Variable small protein 22 from Borrelia hermsii.